Consider the following 262-residue polypeptide: Proliferating cell nuclear antigen (262 aa).

The DNA-binding element occupies 61-80 (RCDRNIAMGVNLNSMSKILK). Lys-164 is covalently cross-linked (Glycyl lysine isopeptide (Lys-Gly) (interchain with G-Cter in ubiquitin)).

Belongs to the PCNA family. As to quaternary structure, homotrimer. Forms a complex with activator 1 heteropentamer in the presence of ATP. Component of the replisome complex. In terms of processing, monoubiquitinated by the UBE2B-RAD18 complex on Lys-164. Monoubiquitination at Lys-164 also takes place in undamaged proliferating cells, and is mediated by the DCX(DTL) complex, leading to enhance PCNA-dependent translesion DNA synthesis.

It is found in the nucleus. This protein is an auxiliary protein of DNA polymerase delta and is involved in the control of eukaryotic DNA replication by increasing the polymerase's processibility during elongation of the leading strand. The protein is Proliferating cell nuclear antigen (PCNA) of Coturnix japonica (Japanese quail).